The sequence spans 246 residues: Phosphomannomutase 2 (246 aa).

N-acetylalanine is present on alanine 2. Residue aspartate 12 is the Nucleophile of the active site. 2 residues coordinate Mg(2+): aspartate 12 and aspartate 14. The Proton donor/acceptor role is filled by aspartate 14. Alpha-D-mannose 1-phosphate is bound by residues arginine 21, arginine 123, arginine 134, arginine 141, serine 179, and aspartate 181. Aspartate 209, phenylalanine 221, aspartate 223, and threonine 226 together coordinate Mg(2+).

This sequence belongs to the eukaryotic PMM family. Homodimer.

The protein localises to the cytoplasm. The catalysed reaction is alpha-D-mannose 1-phosphate = D-mannose 6-phosphate. Its pathway is nucleotide-sugar biosynthesis; GDP-alpha-D-mannose biosynthesis; alpha-D-mannose 1-phosphate from D-fructose 6-phosphate: step 2/2. Its function is as follows. Involved in the synthesis of the GDP-mannose and dolichol-phosphate-mannose required for a number of critical mannosyl transfer reactions. The protein is Phosphomannomutase 2 (PMM2) of Bos taurus (Bovine).